The primary structure comprises 369 residues: Ubiquinone biosynthesis protein COQ4, mitochondrial (369 aa).

A mitochondrion-targeting transit peptide spans 1–35 (MLTSQKVSRVLLHSSFLKTPVSTQSRSFVFTTIAT). Residues histidine 212, aspartate 213, histidine 216, and glutamate 228 each contribute to the Zn(2+) site. Over residues 329–360 (AAAAATVTQRQRQQQRATATAANATSASSANV) the composition is skewed to low complexity. Residues 329–369 (AAAAATVTQRQRQQQRATATAANATSASSANVKPSNTAGAM) form a disordered region.

Belongs to the COQ4 family. Component of a multi-subunit COQ enzyme complex, composed of at least COQ3, COQ4, COQ5, COQ6, COQ7 and COQ9. Zn(2+) is required as a cofactor.

The protein resides in the mitochondrion inner membrane. The enzyme catalyses a 4-hydroxy-3-methoxy-5-(all-trans-polyprenyl)benzoate + H(+) = a 2-methoxy-6-(all-trans-polyprenyl)phenol + CO2. The protein operates within cofactor biosynthesis; ubiquinone biosynthesis. Functionally, lyase that catalyzes the C1-decarboxylation of 4-hydroxy-3-methoxy-5-(all-trans-polyprenyl)benzoic acid into 2-methoxy-6-(all-trans-polyprenyl)phenol during ubiquinone biosynthesis. This is Ubiquinone biosynthesis protein COQ4, mitochondrial from Lodderomyces elongisporus (strain ATCC 11503 / CBS 2605 / JCM 1781 / NBRC 1676 / NRRL YB-4239) (Yeast).